A 430-amino-acid chain; its full sequence is Dihydrofolate synthase/folylpolyglutamate synthase (430 aa).

An ATP-binding site is contributed by glycine 51 to serine 54. Residue serine 75 participates in Mg(2+) binding. 7,8-dihydropteroate is bound at residue threonine 114 to glycine 117. Glutamate 145 serves as a coordination point for Mg(2+). Position 152–154 (phenylalanine 152–serine 154) interacts with 7,8-dihydropteroate. Residue histidine 172 participates in Mg(2+) binding. Residues glutamine 263, arginine 302, and aspartate 315 each contribute to the ATP site.

It belongs to the folylpolyglutamate synthase family. In terms of assembly, monomer. Mg(2+) serves as cofactor.

The enzyme catalyses 7,8-dihydropteroate + L-glutamate + ATP = 7,8-dihydrofolate + ADP + phosphate + H(+). It catalyses the reaction (6S)-5,6,7,8-tetrahydrofolyl-(gamma-L-Glu)(n) + L-glutamate + ATP = (6S)-5,6,7,8-tetrahydrofolyl-(gamma-L-Glu)(n+1) + ADP + phosphate + H(+). The protein operates within cofactor biosynthesis; tetrahydrofolate biosynthesis; 7,8-dihydrofolate from 2-amino-4-hydroxy-6-hydroxymethyl-7,8-dihydropteridine diphosphate and 4-aminobenzoate: step 2/2. It participates in cofactor biosynthesis; tetrahydrofolylpolyglutamate biosynthesis. Its function is as follows. Functions in two distinct reactions of the de novo folate biosynthetic pathway. Catalyzes the addition of a glutamate residue to dihydropteroate (7,8-dihydropteroate or H2Pte) to form dihydrofolate (7,8-dihydrofolate monoglutamate or H2Pte-Glu). Also catalyzes successive additions of L-glutamate to tetrahydrofolate, leading to folylpolyglutamate derivatives. In Bacillus subtilis (strain 168), this protein is Dihydrofolate synthase/folylpolyglutamate synthase (folC).